We begin with the raw amino-acid sequence, 77 residues long: Cell division topological specificity factor (77 aa).

This sequence belongs to the MinE family.

In terms of biological role, prevents the cell division inhibition by proteins MinC and MinD at internal division sites while permitting inhibition at polar sites. This ensures cell division at the proper site by restricting the formation of a division septum at the midpoint of the long axis of the cell. The protein is Cell division topological specificity factor of Nautilia profundicola (strain ATCC BAA-1463 / DSM 18972 / AmH).